The sequence spans 932 residues: Isoleucine--tRNA ligase (932 aa).

The 'HIGH' region signature appears at 57-67 (PYANGDIHIGT). E559 is an L-isoleucyl-5'-AMP binding site. The 'KMSKS' region motif lies at 600–604 (KMSKS). K603 serves as a coordination point for ATP. The Zn(2+) site is built by C899, C902, C919, and C922.

This sequence belongs to the class-I aminoacyl-tRNA synthetase family. IleS type 1 subfamily. As to quaternary structure, monomer. Requires Zn(2+) as cofactor.

The protein localises to the cytoplasm. The enzyme catalyses tRNA(Ile) + L-isoleucine + ATP = L-isoleucyl-tRNA(Ile) + AMP + diphosphate. In terms of biological role, catalyzes the attachment of isoleucine to tRNA(Ile). As IleRS can inadvertently accommodate and process structurally similar amino acids such as valine, to avoid such errors it has two additional distinct tRNA(Ile)-dependent editing activities. One activity is designated as 'pretransfer' editing and involves the hydrolysis of activated Val-AMP. The other activity is designated 'posttransfer' editing and involves deacylation of mischarged Val-tRNA(Ile). This chain is Isoleucine--tRNA ligase, found in Caldanaerobacter subterraneus subsp. tengcongensis (strain DSM 15242 / JCM 11007 / NBRC 100824 / MB4) (Thermoanaerobacter tengcongensis).